The following is a 156-amino-acid chain: Transcription factor E (156 aa).

Residues 1–72 enclose the HTH TFE/IIEalpha-type domain; that stretch reads MYGEKAKKVL…LWILNIDQIE (72 aa).

The protein belongs to the TFE family. In terms of assembly, monomer. Interaction with RNA polymerase subunits RpoF and RpoE is necessary for Tfe stimulatory transcription activity. Able to interact with Tbp and RNA polymerase in the absence of DNA promoter. Interacts both with the preinitiation and elongation complexes.

Transcription factor that plays a role in the activation of archaeal genes transcribed by RNA polymerase. Facilitates transcription initiation by enhancing TATA-box recognition by TATA-box-binding protein (Tbp), and transcription factor B (Tfb) and RNA polymerase recruitment. Not absolutely required for transcription in vitro, but particularly important in cases where Tbp or Tfb function is not optimal. It dynamically alters the nucleic acid-binding properties of RNA polymerases by stabilizing the initiation complex and destabilizing elongation complexes. Seems to translocate with the RNA polymerase following initiation and acts by binding to the non template strand of the transcription bubble in elongation complexes. This Staphylothermus marinus (strain ATCC 43588 / DSM 3639 / JCM 9404 / F1) protein is Transcription factor E.